A 363-amino-acid polypeptide reads, in one-letter code: Diheme-cytochrome-encapsulin shell fusion protein (363 aa).

Residues 1-36 form the signal peptide; that stretch reads MVMGILNTFKKVYAVTGFFALLAVFSLSQVGSSAFA. Residues 37–74 form a diheme c-type cytochrome region; sequence ACAKVDDCFSCHTTQELNAVHKNTPYQGQSCIVCHKAF. Positions 44, 47, 48, 67, 70, and 71 each coordinate heme. A linker region spans residues 75–94; it reads AADDTCSDAKDGRFAKISSE. An encapsulin domain region spans residues 95–363; sequence ININKEDWNK…KCPQAICTLE (269 aa).

This sequence belongs to the encapsulin family. Family 1 subfamily. In terms of assembly, the encapsulin nanocompartment is probably formed by 180 monomers, with the N-terminus (diheme domain) inside. There are 36 pores where the pentamers meet as well as 3-fold axis channels and dimer channels. It depends on heme as a cofactor.

The protein localises to the encapsulin nanocompartment. Functionally, fusion of the shell and cargo protein of a type 1 encapsulin nanocompartment. Protein missing its signal peptide makes 33 nm particles in E.coli (called cEnc), protein missing its signal peptide and diheme domain (residues 1-86, called Enc) makes 29 nm particles. The cEnc nancompartment encloses c-type heme. The cargo protein NIR-HAO (AC P0DV45) is probably targeted to the nanocompartment by its association with the diheme domain in cEnc; removal of the diheme domain in Enc halves the amount of cargo. The polypeptide is Diheme-cytochrome-encapsulin shell fusion protein (Kuenenia stuttgartiensis).